The following is a 98-amino-acid chain: Small ribosomal subunit protein bS6 (98 aa).

It belongs to the bacterial ribosomal protein bS6 family.

Its function is as follows. Binds together with bS18 to 16S ribosomal RNA. This chain is Small ribosomal subunit protein bS6, found in Lactobacillus acidophilus (strain ATCC 700396 / NCK56 / N2 / NCFM).